Here is a 188-residue protein sequence, read N- to C-terminus: Large ribosomal subunit protein eL18 (188 aa).

The segment at 147–188 (EAEKHFGPAPGVPHSHTKPYVRSKGRKFERARGRRASRAYKN) is disordered. Basic residues-rich tracts occupy residues 161–171 (SHTKPYVRSKG) and 178–188 (RGRRASRAYKN).

This sequence belongs to the eukaryotic ribosomal protein eL18 family.

Its subcellular location is the cytoplasm. This is Large ribosomal subunit protein eL18 (rpl-18) from Caenorhabditis elegans.